A 130-amino-acid chain; its full sequence is Ribonuclease P protein component 2 (130 aa).

This sequence belongs to the eukaryotic/archaeal RNase P protein component 2 family. Consists of a catalytic RNA component and at least 5 protein subunits.

Its subcellular location is the cytoplasm. The catalysed reaction is Endonucleolytic cleavage of RNA, removing 5'-extranucleotides from tRNA precursor.. Its function is as follows. Part of ribonuclease P, a protein complex that generates mature tRNA molecules by cleaving their 5'-ends. In Methanococcus maripaludis (strain DSM 14266 / JCM 13030 / NBRC 101832 / S2 / LL), this protein is Ribonuclease P protein component 2.